The sequence spans 158 residues: NAD(P)H-quinone oxidoreductase subunit J, chloroplastic (158 aa).

This sequence belongs to the complex I 30 kDa subunit family. As to quaternary structure, NDH is composed of at least 16 different subunits, 5 of which are encoded in the nucleus.

It localises to the plastid. The protein localises to the chloroplast thylakoid membrane. The enzyme catalyses a plastoquinone + NADH + (n+1) H(+)(in) = a plastoquinol + NAD(+) + n H(+)(out). The catalysed reaction is a plastoquinone + NADPH + (n+1) H(+)(in) = a plastoquinol + NADP(+) + n H(+)(out). Its function is as follows. NDH shuttles electrons from NAD(P)H:plastoquinone, via FMN and iron-sulfur (Fe-S) centers, to quinones in the photosynthetic chain and possibly in a chloroplast respiratory chain. The immediate electron acceptor for the enzyme in this species is believed to be plastoquinone. Couples the redox reaction to proton translocation, and thus conserves the redox energy in a proton gradient. This is NAD(P)H-quinone oxidoreductase subunit J, chloroplastic from Drimys granadensis.